The sequence spans 201 residues: Ribosomal RNA small subunit methyltransferase G (201 aa).

Residues glycine 71, phenylalanine 76, 120 to 121, and arginine 134 contribute to the S-adenosyl-L-methionine site; that span reads LE.

Belongs to the methyltransferase superfamily. RNA methyltransferase RsmG family.

The protein localises to the cytoplasm. It carries out the reaction guanosine(527) in 16S rRNA + S-adenosyl-L-methionine = N(7)-methylguanosine(527) in 16S rRNA + S-adenosyl-L-homocysteine. Functionally, specifically methylates the N7 position of guanine in position 527 of 16S rRNA. In Rhodospirillum rubrum (strain ATCC 11170 / ATH 1.1.1 / DSM 467 / LMG 4362 / NCIMB 8255 / S1), this protein is Ribosomal RNA small subunit methyltransferase G.